The primary structure comprises 180 residues: MENFFNQFFENIGEDKNREGLKETPKRVQELWKFLYKGYKEDPRVALKSAYFQGVCDEMIVAQNIEFYSTCEHHLLPFLGNISLGYIPKEKIVGISAIAKLIEIYSKRLQIQERLTTQITETFDEIIEPRGVIVVCEAKHLCMSMQGVQKQNAIIKTSVLRGLFKKDPKTRAEFMQLLKS.

Zn(2+) contacts are provided by Cys71, His74, and Cys142.

Belongs to the GTP cyclohydrolase I family. As to quaternary structure, toroid-shaped homodecamer, composed of two pentamers of five dimers.

It catalyses the reaction GTP + H2O = 7,8-dihydroneopterin 3'-triphosphate + formate + H(+). The protein operates within cofactor biosynthesis; 7,8-dihydroneopterin triphosphate biosynthesis; 7,8-dihydroneopterin triphosphate from GTP: step 1/1. This Helicobacter pylori (strain HPAG1) protein is GTP cyclohydrolase 1.